The primary structure comprises 442 residues: Tubulin beta chain (442 aa).

Positions 11, 69, 138, 142, 143, 144, 204, and 226 each coordinate GTP. A Mg(2+)-binding site is contributed by glutamate 69.

This sequence belongs to the tubulin family. Dimer of alpha and beta chains. A typical microtubule is a hollow water-filled tube with an outer diameter of 25 nm and an inner diameter of 15 nM. Alpha-beta heterodimers associate head-to-tail to form protofilaments running lengthwise along the microtubule wall with the beta-tubulin subunit facing the microtubule plus end conferring a structural polarity. Microtubules usually have 13 protofilaments but different protofilament numbers can be found in some organisms and specialized cells. Requires Mg(2+) as cofactor.

The protein localises to the cytoplasm. It is found in the cytoskeleton. Tubulin is the major constituent of microtubules, a cylinder consisting of laterally associated linear protofilaments composed of alpha- and beta-tubulin heterodimers. Microtubules grow by the addition of GTP-tubulin dimers to the microtubule end, where a stabilizing cap forms. Below the cap, tubulin dimers are in GDP-bound state, owing to GTPase activity of alpha-tubulin. The polypeptide is Tubulin beta chain (TUB-B) (Pneumocystis carinii).